Consider the following 945-residue polypeptide: Xylosyltransferase 1 (945 aa).

The Cytoplasmic portion of the chain corresponds to 1-17 (MQAAPCARRLARRSHSA). The chain crosses the membrane as a helical; Signal-anchor for type II membrane protein span at residues 18 to 38 (LLAALTVLLLQTLVVWNFSSL). The Lumenal segment spans residues 39–945 (DSGAGERRGG…GAVKPDGRLR (907 aa)). The segment at 42-245 (AGERRGGAAV…KYDQPPKCDI (204 aa)) is disordered. Residues 76-103 (RGGGGGGGGCGGGGRGPQARARGGGPGE) are compositionally biased toward gly residues. Residues 131 to 147 (KVRTDSNNENSVPKDFE) show a composition bias toward basic and acidic residues. Positions 149–158 (VDNSNFAPRT) are enriched in polar residues. The span at 163-190 (HQPELAKKPPSRQKELLKRKLEQQEKGK) shows a compositional bias: basic and acidic residues. Asn212 carries an N-linked (GlcNAc...) asparagine glycan. Residues 235-245 (TKYDQPPKCDI) show a composition bias toward basic and acidic residues. Disulfide bonds link Cys243–Cys271, Cys287–Cys528, Cys547–Cys560, and Cys549–Cys558. Residues Val319, Asp347, and 376–378 (TIW) contribute to the UDP-alpha-D-xylose site. Residue Asn407 is glycosylated (N-linked (GlcNAc...) asparagine). 480–481 (DW) contributes to the UDP-alpha-D-xylose binding site. Residues Ser561 and 584-585 (RK) contribute to the UDP-alpha-D-xylose site. 2 disulfides stabilise this stretch: Cys661-Cys913 and Cys906-Cys919. Asn763 carries N-linked (GlcNAc...) asparagine glycosylation. Residues 926-945 (SFSPDPKSELGAVKPDGRLR) are disordered.

Belongs to the glycosyltransferase 14 family. XylT subfamily. In terms of assembly, monomer. The cofactor is a divalent metal cation. Post-translationally, contains 7 disulfide bonds. In terms of processing, N-glycosylated.

It is found in the golgi apparatus membrane. It catalyses the reaction UDP-alpha-D-xylose + L-seryl-[protein] = 3-O-(beta-D-xylosyl)-L-seryl-[protein] + UDP + H(+). It participates in glycan metabolism; chondroitin sulfate biosynthesis. The protein operates within glycan metabolism; heparan sulfate biosynthesis. Its function is as follows. Catalyzes the first step in the biosynthesis of chondroitin sulfate and dermatan sulfate proteoglycans, such as DCN. Transfers D-xylose from UDP-D-xylose to specific serine residues of the core protein. Required for normal maturation of chondrocytes during bone development, normal onset of ossification and normal embryonic and postnatal skeleton development, especially of the long bones. The sequence is that of Xylosyltransferase 1 (XYLT1) from Pan troglodytes (Chimpanzee).